The following is a 656-amino-acid chain: tRNA 5-methylaminomethyl-2-thiouridine biosynthesis bifunctional protein MnmC (656 aa).

The tract at residues 1-236 is tRNA (mnm(5)s(2)U34)-methyltransferase; it reads MTDPLIPAVL…KRAMLVGRFA (236 aa). Residues 260-656 are FAD-dependent cmnm(5)s(2)U34 oxidoreductase; that stretch reads IGTGLAGCAV…LRALRQGTVS (397 aa).

This sequence in the N-terminal section; belongs to the methyltransferase superfamily. tRNA (mnm(5)s(2)U34)-methyltransferase family. It in the C-terminal section; belongs to the DAO family. It depends on FAD as a cofactor.

It is found in the cytoplasm. It carries out the reaction 5-aminomethyl-2-thiouridine(34) in tRNA + S-adenosyl-L-methionine = 5-methylaminomethyl-2-thiouridine(34) in tRNA + S-adenosyl-L-homocysteine + H(+). In terms of biological role, catalyzes the last two steps in the biosynthesis of 5-methylaminomethyl-2-thiouridine (mnm(5)s(2)U) at the wobble position (U34) in tRNA. Catalyzes the FAD-dependent demodification of cmnm(5)s(2)U34 to nm(5)s(2)U34, followed by the transfer of a methyl group from S-adenosyl-L-methionine to nm(5)s(2)U34, to form mnm(5)s(2)U34. The protein is tRNA 5-methylaminomethyl-2-thiouridine biosynthesis bifunctional protein MnmC of Paraburkholderia xenovorans (strain LB400).